The primary structure comprises 498 residues: NADH-quinone oxidoreductase subunit N (498 aa).

Helical transmembrane passes span 10-30 (LMPL…MLLI), 44-64 (VVGL…GKFV), 68-88 (VMGM…ILVA), 109-129 (ELYL…ASSH), 130-150 (YASF…LLAY), 164-184 (YLVL…YIYA), 207-227 (VLLG…LAPF), 239-259 (PAPM…GLFV), 273-293 (LVTV…LLAV), 301-321 (ILGY…ISMT), 328-348 (VTVY…AVAL), 377-397 (ATLT…GFIG), 412-434 (FLAA…VMVV), and 458-478 (LMVL…DPMI).

Belongs to the complex I subunit 2 family. As to quaternary structure, NDH-1 is composed of 14 different subunits. Subunits NuoA, H, J, K, L, M, N constitute the membrane sector of the complex.

The protein resides in the cell inner membrane. It catalyses the reaction a quinone + NADH + 5 H(+)(in) = a quinol + NAD(+) + 4 H(+)(out). In terms of biological role, NDH-1 shuttles electrons from NADH, via FMN and iron-sulfur (Fe-S) centers, to quinones in the respiratory chain. The immediate electron acceptor for the enzyme in this species is believed to be ubiquinone. Couples the redox reaction to proton translocation (for every two electrons transferred, four hydrogen ions are translocated across the cytoplasmic membrane), and thus conserves the redox energy in a proton gradient. In Acinetobacter baumannii (strain AB0057), this protein is NADH-quinone oxidoreductase subunit N.